Consider the following 282-residue polypeptide: sn-glycerol-3-phosphate transport system permease protein UgpE (282 aa).

Transmembrane regions (helical) follow at residues 14 to 34 (LILI…FVAS), 86 to 106 (MAIA…IVFF), 112 to 132 (MFFF…RILP), 146 to 168 (YAGL…QFFL), 201 to 221 (IAAL…WPLL), and 248 to 268 (WNYV…VVVL). The region spanning 78–269 (LWNSFVVAMA…IPLILVVVLM (192 aa)) is the ABC transmembrane type-1 domain.

This sequence belongs to the binding-protein-dependent transport system permease family. In terms of assembly, the complex is composed of two ATP-binding proteins (UgpC), two transmembrane proteins (UgpA and UgpE) and a solute-binding protein (UgpB).

The protein localises to the cell inner membrane. In terms of biological role, part of the ABC transporter complex UgpBAEC involved in sn-glycerol-3-phosphate (G3P) import. Probably responsible for the translocation of the substrate across the membrane. In Brucella abortus (strain 2308), this protein is sn-glycerol-3-phosphate transport system permease protein UgpE (ugpE).